We begin with the raw amino-acid sequence, 130 residues long: Holo-[acyl-carrier-protein] synthase (130 aa).

2 residues coordinate Mg(2+): Asp9 and Glu58.

Belongs to the P-Pant transferase superfamily. AcpS family. The cofactor is Mg(2+).

The protein resides in the cytoplasm. It catalyses the reaction apo-[ACP] + CoA = holo-[ACP] + adenosine 3',5'-bisphosphate + H(+). Functionally, transfers the 4'-phosphopantetheine moiety from coenzyme A to a Ser of acyl-carrier-protein. The chain is Holo-[acyl-carrier-protein] synthase from Mycobacterium leprae (strain Br4923).